The primary structure comprises 194 residues: MNLISSYKTEFELLRKFIEEEEERKETEKVAQKLANIFTKGKKVLICGNGGSNCDAMHFIEEFTGRFRKERRALPAISISDPSHITCVANDYGFEYIFSKGVEAYGQEGDMFIGISTSGNSPNVIKAVEQAKAQGLVTVGLLGKDGGKLKGMCDYEFIIPGKTSDRVQEIHMMILHIIIEGVERIMFPENYVEE.

The SIS domain occupies 34 to 188 (LANIFTKGKK…IEGVERIMFP (155 aa)). A substrate-binding site is contributed by 49-51 (NGG). Zn(2+) is bound by residues His-58 and Glu-62. Residues Glu-62, 90-91 (ND), 116-118 (STS), Ser-121, and Gln-168 contribute to the substrate site. Zn(2+) contacts are provided by Gln-168 and His-176.

Belongs to the SIS family. GmhA subfamily. Requires Zn(2+) as cofactor.

It is found in the cytoplasm. The enzyme catalyses 2 D-sedoheptulose 7-phosphate = D-glycero-alpha-D-manno-heptose 7-phosphate + D-glycero-beta-D-manno-heptose 7-phosphate. The protein operates within carbohydrate biosynthesis; D-glycero-D-manno-heptose 7-phosphate biosynthesis; D-glycero-alpha-D-manno-heptose 7-phosphate and D-glycero-beta-D-manno-heptose 7-phosphate from sedoheptulose 7-phosphate: step 1/1. Catalyzes the isomerization of sedoheptulose 7-phosphate in D-glycero-D-manno-heptose 7-phosphate. This Fusobacterium nucleatum subsp. nucleatum (strain ATCC 25586 / DSM 15643 / BCRC 10681 / CIP 101130 / JCM 8532 / KCTC 2640 / LMG 13131 / VPI 4355) protein is Phosphoheptose isomerase.